The sequence spans 350 residues: Ion-translocating oxidoreductase complex subunit D (350 aa).

The next 3 membrane-spanning stretches (helical) occupy residues 36 to 56 (CYFF…IAVA), 89 to 109 (IPAL…ILVV), and 124 to 144 (AMAA…TWVA). Thr-185 bears the FMN phosphoryl threonine mark. The next 5 membrane-spanning stretches (helical) occupy residues 212 to 232 (GFGI…LVML), 239 to 259 (WQIS…GYLL), 265 to 285 (MGPL…FIAT), 298 to 318 (LIFG…CGYP), and 319 to 339 (DAFA…DYYV).

This sequence belongs to the NqrB/RnfD family. The complex is composed of six subunits: RnfA, RnfB, RnfC, RnfD, RnfE and RnfG. FMN serves as cofactor.

The protein resides in the cell inner membrane. Part of a membrane-bound complex that couples electron transfer with translocation of ions across the membrane. In Shewanella loihica (strain ATCC BAA-1088 / PV-4), this protein is Ion-translocating oxidoreductase complex subunit D.